A 488-amino-acid chain; its full sequence is Prostaglandin E2 receptor EP4 subtype (488 aa).

The Extracellular segment spans residues M1–N19. N7 carries an N-linked (GlcNAc...) asparagine glycan. Residues P20 to C43 form a helical membrane-spanning segment. Residues K44 to Y55 lie on the Cytoplasmic side of the membrane. Residues T56 to T79 traverse the membrane as a helical segment. Topologically, residues Y80–T96 are extracellular. A disulfide bridge links C92 with C170. A helical transmembrane segment spans residues F97 to I115. At E116–L135 the chain is on the cytoplasmic side. The helical transmembrane segment at A136–R160 threads the bilayer. At S161–F184 the chain is on the extracellular side. A glycan (N-linked (GlcNAc...) asparagine) is linked at N177. The helical transmembrane segment at S185 to L211 threads the bilayer. At R212 to E270 the chain is on the cytoplasmic side. Residues I271 to N298 form a helical membrane-spanning segment. Over Q299–L315 the chain is Extracellular. Residues Q316–L335 form a helical membrane-spanning segment. Residues R336–I488 lie on the Cytoplasmic side of the membrane. The segment covering R358–R371 has biased composition (basic and acidic residues). The interval R358–R381 is disordered. Residues T372–R381 are compositionally biased toward polar residues. Residues S377, S380, S382, and S385 each carry the phosphoserine modification. Residues E456–T475 form a disordered region.

The protein belongs to the G-protein coupled receptor 1 family. As to quaternary structure, interacts with FEM1A. In terms of processing, phosphorylation mediates agonist-mediated desensitization by promoting cytoplasmic retention. As to expression, highly expressed in intestine, duodenal epithelium, uterus, thymus and adrenal cortex. Lower but significant expression in whole adrenal, lung, spleen, stomach, and kidney. In this latter organ, the receptor is localized in the glomeruli and the transitional epithelium of the renal calyx.

It is found in the cell membrane. In terms of biological role, receptor for prostaglandin E2 (PGE2). The activity of this receptor is mediated by G(s) proteins that stimulate adenylate cyclase. Has a relaxing effect on smooth muscle. May play an important role in regulating renal hemodynamics, intestinal epithelial transport, adrenal aldosterone secretion, and uterine function. The chain is Prostaglandin E2 receptor EP4 subtype (PTGER4) from Oryctolagus cuniculus (Rabbit).